Reading from the N-terminus, the 414-residue chain is Putative competence-damage inducible protein (414 aa).

This sequence belongs to the CinA family.

This is Putative competence-damage inducible protein from Listeria monocytogenes serotype 4a (strain HCC23).